The following is a 233-amino-acid chain: 7-cyano-7-deazaguanine synthase (233 aa).

17–27 (LSGGLDSMVCA) contributes to the ATP binding site. 4 residues coordinate Zn(2+): cysteine 196, cysteine 206, cysteine 209, and cysteine 212.

It belongs to the QueC family. It depends on Zn(2+) as a cofactor.

It carries out the reaction 7-carboxy-7-deazaguanine + NH4(+) + ATP = 7-cyano-7-deazaguanine + ADP + phosphate + H2O + H(+). It participates in purine metabolism; 7-cyano-7-deazaguanine biosynthesis. Catalyzes the ATP-dependent conversion of 7-carboxy-7-deazaguanine (CDG) to 7-cyano-7-deazaguanine (preQ(0)). The chain is 7-cyano-7-deazaguanine synthase from Novosphingobium aromaticivorans (strain ATCC 700278 / DSM 12444 / CCUG 56034 / CIP 105152 / NBRC 16084 / F199).